A 181-amino-acid chain; its full sequence is Inner membrane-spanning protein YciB (181 aa).

Helical transmembrane passes span Leu-10–Ile-30, Met-50–Asp-70, Ile-80–Ile-100, Trp-120–Leu-140, and Phe-148–Ile-168.

The protein belongs to the YciB family.

Its subcellular location is the cell inner membrane. Plays a role in cell envelope biogenesis, maintenance of cell envelope integrity and membrane homeostasis. The polypeptide is Inner membrane-spanning protein YciB (Vibrio cholerae serotype O1 (strain ATCC 39541 / Classical Ogawa 395 / O395)).